The primary structure comprises 205 residues: Dephospho-CoA kinase (205 aa).

The region spanning 15 to 205 (VIGLTGGIAT…VERALDQASI (191 aa)) is the DPCK domain. Residue 23–28 (ATGKST) participates in ATP binding.

This sequence belongs to the CoaE family.

It localises to the cytoplasm. It catalyses the reaction 3'-dephospho-CoA + ATP = ADP + CoA + H(+). It functions in the pathway cofactor biosynthesis; coenzyme A biosynthesis; CoA from (R)-pantothenate: step 5/5. In terms of biological role, catalyzes the phosphorylation of the 3'-hydroxyl group of dephosphocoenzyme A to form coenzyme A. The protein is Dephospho-CoA kinase of Gloeobacter violaceus (strain ATCC 29082 / PCC 7421).